Consider the following 540-residue polypeptide: Cytochrome P450 monooxygenase prx8 (540 aa).

Residues 50 to 68 traverse the membrane as a helical segment; sequence ALGAAIALFACACAYALVA. N460 is a glycosylation site (N-linked (GlcNAc...) asparagine). C483 provides a ligand contact to heme.

The protein belongs to the cytochrome P450 family. The cofactor is heme.

The protein localises to the membrane. The protein operates within sesquiterpene biosynthesis. Cytochrome P450 monooxygenase; part of the gene cluster that mediates the biosynthesis of PR-toxin, a bicyclic sesquiterpene belonging to the eremophilane class and acting as a mycotoxin. The first step of the pathway is catalyzed by the aristolochene synthase which performs the cyclization of trans,trans-farnesyl diphosphate (FPP) to the bicyclic sesquiterpene aristolochene. Following the formation of aristolochene, the non-oxygenated aristolochene is converted to the trioxygenated intermediate eremofortin B, via 7-epi-neopetasone. This conversion appears to involve three enzymes, a hydroxysterol oxidase-like enzyme, the quinone-oxidase prx3 that forms the quinone-type-structure in the bicyclic nucleus of aristolochene with the C8-oxo group and the C-3 hydroxyl group, and the P450 monooxygenase prx9 that introduces the epoxide at the double bond between carbons 1 and 2. No monoxy or dioxy-intermediates have been reported to be released to the broth, so these three early oxidative reactions may be coupled together. Eremofortin B is further oxidized by another P450 monooxygenase, that introduces a second epoxide between carbons 7 and 11 prior to acetylation to eremofortin A by the acetyltransferase prx11. The second epoxidation may be performed by a second P450 monooxygenase. After the acetylation step, eremofortin A is converted to eremofortin C and then to PR-toxin. First the conversion of eremofortin A to eremofortin C proceeds by oxidation of the side chain of the molecule at C-12 and is catalyzed by the short-chain oxidoreductase prx1. The cytochrome P450 monooxygenase prx8 also plays a role in this step. The primary alcohol formed at C-12 is finally oxidized by the short-chain alcohol dehydrogenase prx4 that forms PR-toxin. The sequence is that of Cytochrome P450 monooxygenase prx8 from Penicillium rubens (strain ATCC 28089 / DSM 1075 / NRRL 1951 / Wisconsin 54-1255) (Penicillium chrysogenum).